The following is a 361-amino-acid chain: Zinc transporter ZIP13 (361 aa).

Residues 1–6 (MPGCPC) lie on the Lumenal side of the membrane. A helical membrane pass occupies residues 7–27 (PGCGMAGQRLLFLTVLALELL). Over 28 to 68 (ERAGGSQPALRSLGAAAACRLDSKESESWGALLSGERLDTW) the chain is Cytoplasmic. Residues 69–89 (ICSLLGSLMVGLSGVFPLLVI) traverse the membrane as a helical segment. Residues 90 to 108 (PLEMGTMLQSEAGAWRLKQ) lie on the Lumenal side of the membrane. A helical transmembrane segment spans residues 109 to 129 (LLSFALGGLLGNVFLHLLPEA). Over 130–150 (WAYTCNISPGVEGQSLQRQQQ) the chain is Cytoplasmic. The helical transmembrane segment at 151-171 (LGLWVIAGFLTFLALEKMFLN) threads the bilayer. The Lumenal segment spans residues 172 to 233 (CKEEDPSQAP…TIDNFTHGLA (62 aa)). The chain crosses the membrane as a helical span at residues 234–254 (VAASFLVSKKIGLLTTMAILL). Positions 255–260 (HEIPHE) match the XEXPHE-motif motif. Topologically, residues 255–276 (HEIPHEVGDFAILLRAGFDRWT) are cytoplasmic. A helical transmembrane segment spans residues 277–297 (AAKLQFSTALGGLLGACFAIC). Residues 298–307 (TQSPKGVEET) are Lumenal-facing. The helical transmembrane segment at 308-328 (VVWTLPFTSGGFLYVALVNVL) threads the bilayer. Over 329–340 (PDLLEEDDPWHL) the chain is Cytoplasmic. The chain crosses the membrane as a helical span at residues 341 to 361 (NPPLPTGTPCSRCCCSAPVSW).

Belongs to the ZIP transporter (TC 2.A.5) family. In terms of assembly, homodimer.

It is found in the golgi apparatus membrane. Its subcellular location is the cytoplasmic vesicle membrane. It localises to the endoplasmic reticulum membrane. It carries out the reaction Zn(2+)(in) = Zn(2+)(out). Functionally, functions as a zinc transporter transporting Zn(2+) from the Golgi apparatus to the cytosol and thus influences the zinc level at least in areas of the cytosol. May regulate beige adipocyte differentiation. This is Zinc transporter ZIP13 from Rattus norvegicus (Rat).